We begin with the raw amino-acid sequence, 608 residues long: Elongation factor 4 (608 aa).

In terms of domain architecture, tr-type G spans Lys11–Ser193. Residues Asp23–Thr28 and Asn140–Asp143 contribute to the GTP site.

It belongs to the TRAFAC class translation factor GTPase superfamily. Classic translation factor GTPase family. LepA subfamily.

The protein localises to the cell membrane. It carries out the reaction GTP + H2O = GDP + phosphate + H(+). In terms of biological role, required for accurate and efficient protein synthesis under certain stress conditions. May act as a fidelity factor of the translation reaction, by catalyzing a one-codon backward translocation of tRNAs on improperly translocated ribosomes. Back-translocation proceeds from a post-translocation (POST) complex to a pre-translocation (PRE) complex, thus giving elongation factor G a second chance to translocate the tRNAs correctly. Binds to ribosomes in a GTP-dependent manner. In Listeria innocua serovar 6a (strain ATCC BAA-680 / CLIP 11262), this protein is Elongation factor 4.